Reading from the N-terminus, the 144-residue chain is Major allergen Blo t 12 (144 aa).

Residues 1–20 (MKSVLIFLVAIALFSANIVS) form the signal peptide. Residues 24-77 (QTTRGRHTEPDDHHEKPTTQCTHEETTSTQHHHEEVVTTQTPHHEEKTTTEETH) are disordered. Residues 92–144 (HVVCHEEGPIHIQEMCNKYIICSKSGSLWYITVMPCSIGTKFDPISRNCVLDN) form the Chitin-binding type-2 domain. Cysteine 127 and cysteine 140 form a disulfide bridge.

The polypeptide is Major allergen Blo t 12 (Blomia tropicalis (Mite)).